Consider the following 518-residue polypeptide: MLFRFLQTLARFCRFLLISVLGFRFSPLLLLGYVKLQDENKHNSESALASGTDAKQPEAAENVTSSSIDFAVNSVVKVFTVYSMPSVLQPWRNWPQQESGGSGFVISGKKILTNAHVVADHIFLQVRKHGSPTKYKAQVRAIGHECDLAILEIDNEEFWEDMIPLELGEIPSLDESVAVFGYPTGGDSVSITKGYVSRVEYTRYAHGGTTLLAIQTDAAINPGNSGGPAIIGNKMAGVAFQKDPSADNIGYIIPTPVIKHFLTAVEENGQYGGFCTLDISYQLMENSQLRNHFKMGPEMTGILINEINPLSDAYKRLRKDDIILAIDDVLIGNDAKVTFRNKERINFNHFVSMKKLDETVLLQVLRDGKEHEFHIMVKPVPPLVPGHQYDKLPSYYIFAGFVFVPLTQPYIDSTLICNCAIKYMPEKAGEQLVLADDINAGYTDFKNLKVIKVNGVQVENLKHLTELVETCWTEDLRLDLENEKVVVLNYANAKEATSLILELHRIPSANEYDYQWQS.

The N-terminal 23 residues, 1 to 23, are a transit peptide targeting the mitochondrion; that stretch reads MLFRFLQTLARFCRFLLISVLGF. Residues 98-262 are serine protease; that stretch reads ESGGSGFVIS…IPTPVIKHFL (165 aa). Catalysis depends on charge relay system residues H116, D147, and S225. A PDZ domain is found at 278–358; it reads DISYQLMENS…HFVSMKKLDE (81 aa).

This sequence belongs to the peptidase S1C family.

The protein localises to the mitochondrion membrane. Functionally, putative serine protease. This is Protease Do-like 4, mitochondrial (DEGP4) from Arabidopsis thaliana (Mouse-ear cress).